A 340-amino-acid polypeptide reads, in one-letter code: Phenylalanine--tRNA ligase alpha subunit (340 aa).

Glu254 provides a ligand contact to Mg(2+).

Belongs to the class-II aminoacyl-tRNA synthetase family. Phe-tRNA synthetase alpha subunit type 1 subfamily. As to quaternary structure, tetramer of two alpha and two beta subunits. The cofactor is Mg(2+).

It is found in the cytoplasm. It catalyses the reaction tRNA(Phe) + L-phenylalanine + ATP = L-phenylalanyl-tRNA(Phe) + AMP + diphosphate + H(+). This is Phenylalanine--tRNA ligase alpha subunit from Caldicellulosiruptor saccharolyticus (strain ATCC 43494 / DSM 8903 / Tp8T 6331).